Consider the following 148-residue polypeptide: Ribonuclease pancreatic (148 aa).

The first 25 residues, 1–25 (MGLEKSLILFPLLVLVVGWVQPSLG), serve as a signal peptide directing secretion. Substrate is bound by residues K32, R35, 65–69 (KPVNT), K90, and R109. Cystine bridges form between C50-C108, C64-C119, C82-C134, and C89-C96. H143 functions as the Proton donor in the catalytic mechanism.

It belongs to the pancreatic ribonuclease family. As to quaternary structure, monomer. Interacts with and forms tight 1:1 complexes with RNH1. Dimerization of two such complexes may occur. Interaction with RNH1 inhibits this protein. Pancreas.

The protein resides in the secreted. The catalysed reaction is an [RNA] containing cytidine + H2O = an [RNA]-3'-cytidine-3'-phosphate + a 5'-hydroxy-ribonucleotide-3'-[RNA].. The enzyme catalyses an [RNA] containing uridine + H2O = an [RNA]-3'-uridine-3'-phosphate + a 5'-hydroxy-ribonucleotide-3'-[RNA].. Endonuclease that catalyzes the cleavage of RNA on the 3' side of pyrimidine nucleotides. Acts on single-stranded and double-stranded RNA. The protein is Ribonuclease pancreatic (RNASE1) of Peromyscus leucopus (White-footed mouse).